A 562-amino-acid polypeptide reads, in one-letter code: Valerena-4,7(11)-diene synthase (562 aa).

The Mg(2+) site is built by aspartate 314, aspartate 318, and glutamate 467. The DDXXD motif motif lies at 314-318 (DDTYD).

The protein belongs to the terpene synthase family. Mg(2+) serves as cofactor. In terms of tissue distribution, predominantly expressed in root.

It catalyses the reaction (2E,6E)-farnesyl diphosphate = valerena-4,7(11)-diene + diphosphate. Catalyzes formation of valerena-4,7(11)-diene, one of the active ingredients responsible for the sedative effect extracted from Valeriana officinalis root. In Valeriana officinalis (Valerian), this protein is Valerena-4,7(11)-diene synthase (TPS2).